The sequence spans 44 residues: uncharacterized protein (44 aa).

A helical membrane pass occupies residues 4-24; the sequence is ISSILIRGGGVLIVVILLLWI.

It localises to the membrane. This is an uncharacterized protein from Ornithodoros (relapsing fever ticks).